Consider the following 63-residue polypeptide: Light-harvesting protein B-800/850 alpha chain (63 aa).

Topologically, residues 1-14 (MNNAKMWLVVKPTV) are cytoplasmic. The helical transmembrane segment at 15–35 (GIPLFLVACAIASFLVHLMLV) threads the bilayer. Residue H31 coordinates a bacteriochlorophyll. The Periplasmic segment spans residues 36–63 (LTTGWMGDYYSGSFEAASLVSNATTLLS).

Belongs to the antenna complex alpha subunit family. The core complex is formed by different alpha and beta chains, binding bacteriochlorophyll molecules, and arranged most probably in tetrameric structures disposed around the reaction center. The non-pigmented gamma chains may constitute additional components.

It is found in the cell inner membrane. Its function is as follows. Antenna complexes are light-harvesting systems, which transfer the excitation energy to the reaction centers. In Rhodovulum sulfidophilum (Rhodobacter sulfidophilus), this protein is Light-harvesting protein B-800/850 alpha chain (pucA).